The primary structure comprises 145 residues: Methyl-coenzyme M reductase I operon protein D (145 aa).

As to quaternary structure, MCR is composed of three subunits: alpha, beta, and gamma. The function of proteins C and D is not known.

In Methanothermobacter thermautotrophicus (strain ATCC 29096 / DSM 1053 / JCM 10044 / NBRC 100330 / Delta H) (Methanobacterium thermoautotrophicum), this protein is Methyl-coenzyme M reductase I operon protein D (mcrD).